The following is a 298-amino-acid chain: Protoheme IX farnesyltransferase (298 aa).

The next 9 helical transmembrane spans lie at 23 to 43 (LLLL…GKPY), 47 to 67 (LVVL…NMYF), 93 to 113 (VFIA…RIIN), 115 to 135 (HFAL…TYLL), 143 to 163 (IIAG…AAAG), 169 to 189 (ALLF…FLAT), 211 to 231 (IAVA…IVGL), 236 to 256 (VIGT…FHLA), and 278 to 298 (MMLG…YIIS).

Belongs to the UbiA prenyltransferase family. Protoheme IX farnesyltransferase subfamily.

Its subcellular location is the cell membrane. The catalysed reaction is heme b + (2E,6E)-farnesyl diphosphate + H2O = Fe(II)-heme o + diphosphate. Its pathway is porphyrin-containing compound metabolism; heme O biosynthesis; heme O from protoheme: step 1/1. Its function is as follows. Converts heme B (protoheme IX) to heme O by substitution of the vinyl group on carbon 2 of heme B porphyrin ring with a hydroxyethyl farnesyl side group. This chain is Protoheme IX farnesyltransferase, found in Hyperthermus butylicus (strain DSM 5456 / JCM 9403 / PLM1-5).